Here is a 680-residue protein sequence, read N- to C-terminus: MNFETSRCATLQYCPDPYIQRFIETPAHFSWKESYYRSAMSQSTQTSEFLSPEVFQHIWDFLEQPICSVQPIELNFVDEPSENGATNKIEISMDCIRMQDSDLSDPMWPQYTNLGLLNSMDQQIQNGSSSTSPYNTDHAQNSVTAPSPYAQPSSTFDALSPSPAIPSNTDYPGPHSFDVSFQQSSTAKSATWTYSTELKKLYCQIAKTCPIQIKVMTPPPQGAVIRAMPVYKKAEHVTEVVKRCPNHELSREFNEGQIAPPSHLIRVEGNSHAQYVEDPITGRQSVLVPYEPPQVGTEFTTVLYNFMCNSSCVGGMNRRPILIIVTLETRDGQVLGRRCFEARICACPGRDRKADEDSIRKQQVSDSAKNGDGTKRPFRQNTHGIQMTSIKKRRSPDDELLYLPVRGRETYEMLLKIKESLELMQYLPQHTIETYRQQQQQQHQHLLQKQTSMQSQSSYGNSSPPLNKMNSMNKLPSVSQLINPQQRNALTPTTMPEGMGANIPMMGTHMPMAGDMNGLSPTQALPPPLSMPSTSHCTPPPPYPTDCSIVSFLARLGCSSCLDYFTTQGLTTIYQIEHYSMDDLASLKIPEQFRHAIWKGILDHRQLHDFSSPPHLLRTPSGASTVSVGSSETRGERVIDAVRFTLRQTISFPPRDEWNDFNFDMDSRRNKQQRIKEEGE.

A transcription activation region spans residues 1–107 (MNFETSRCAT…MQDSDLSDPM (107 aa)). Residues 123 to 157 (QIQNGSSSTSPYNTDHAQNSVTAPSPYAQPSSTFD) show a composition bias toward polar residues. The disordered stretch occupies residues 123-171 (QIQNGSSSTSPYNTDHAQNSVTAPSPYAQPSSTFDALSPSPAIPSNTDY). Residues 170 to 362 (DYPGPHSFDV…KADEDSIRKQ (193 aa)) mediate DNA binding. 4 residues coordinate Zn(2+): Cys-244, His-247, Cys-308, and Cys-312. Residues 351–360 (DRKADEDSIR) show a composition bias toward basic and acidic residues. Disordered regions lie at residues 351–393 (DRKA…IKKR) and 436–472 (RQQQQQQHQHLLQKQTSMQSQSSYGNSSPPLNKMNSM). Residues 352-388 (RKADEDSIRKQQVSDSAKNGDGTKRPFRQNTHGIQMT) are interaction with HIPK2. A compositionally biased stretch (polar residues) spans 379–389 (RQNTHGIQMTS). Positions 394 to 443 (RSPDDELLYLPVRGRETYEMLLKIKESLELMQYLPQHTIETYRQQQQQQH) are oligomerization. The segment covering 437–463 (QQQQQQHQHLLQKQTSMQSQSSYGNSS) has biased composition (low complexity). The 67-residue stretch at 541 to 607 (PPYPTDCSIV…WKGILDHRQL (67 aa)) folds into the SAM domain. The segment at 610–680 (FSSPPHLLRT…KQQRIKEEGE (71 aa)) is transactivation inhibition. A Glycyl lysine isopeptide (Lys-Gly) (interchain with G-Cter in SUMO) cross-link involves residue Lys-676.

Belongs to the p53 family. In terms of assembly, binds DNA as a homotetramer. Isoform composition of the tetramer may determine transactivation activity. Interacts with HIPK2. Interacts with SSRP1, leading to stimulate coactivator activity. Interacts with PDS5A. Interacts (via activation domain) with NOC2L. Interacts with WWP1. The cofactor is Zn(2+). May be sumoylated. In terms of processing, ubiquitinated. Polyubiquitination involves WWP1 and leads to proteasomal degradation of this protein. As to expression, widely expressed, notably in thymus, prostate, placenta and skeletal muscle, although the precise isoform varies according to tissue type. Progenitor cell layers of skin, breast and prostate express high levels of DeltaN-type isoforms.

The protein localises to the nucleus. In terms of biological role, acts as a sequence specific DNA binding transcriptional activator or repressor. The isoforms contain a varying set of transactivation and auto-regulating transactivation inhibiting domains thus showing an isoform specific activity. May be required in conjunction with TP73/p73 for initiation of p53/TP53 dependent apoptosis in response to genotoxic insults and the presence of activated oncogenes. Involved in Notch signaling by probably inducing JAG1 and JAG2. Activates transcription of the p21 promoter. Activates RIPK4 transcription. Plays a role in the regulation of epithelial morphogenesis. The ratio of DeltaN-type and TA*-type isoforms may govern the maintenance of epithelial stem cell compartments and regulate the initiation of epithelial stratification from the undifferentiated embryonal ectoderm. Required for limb formation from the apical ectodermal ridge. The polypeptide is Tumor protein 63 (Tp63) (Mus musculus (Mouse)).